Here is an 89-residue protein sequence, read N- to C-terminus: Small ribosomal subunit protein uS15 (89 aa).

This sequence belongs to the universal ribosomal protein uS15 family. Part of the 30S ribosomal subunit. Forms a bridge to the 50S subunit in the 70S ribosome, contacting the 23S rRNA.

In terms of biological role, one of the primary rRNA binding proteins, it binds directly to 16S rRNA where it helps nucleate assembly of the platform of the 30S subunit by binding and bridging several RNA helices of the 16S rRNA. Forms an intersubunit bridge (bridge B4) with the 23S rRNA of the 50S subunit in the ribosome. This Lysinibacillus sphaericus (strain C3-41) protein is Small ribosomal subunit protein uS15.